A 546-amino-acid polypeptide reads, in one-letter code: MAAKEVKFGSDARAKMLRGVDILADAVKVTLGPKGRNVVIEKSFGAPRITKDGVTVAKEIELSDKFENMGAQMVKEVAQKTADLAGDGTTTATVLAQAIVREGAKAIAAGMNPMDVKRGVDVAVQTVVDDIKSRSRKVTTNDEIAQVGTISANGEAEIGKMIAEAMQKVGNEGVITVEEAKALETELDVVEGMQFDRGYLSPYFVTNADKMVAELESPYILLFEKKLSGLQAMLPVLEAVVQSSRPLLIVAEDVEGEALATLVVNKLRGGLKVAAVKAPGFGDRRKAMLEDMAILTGGQVVSEDLGIKLENVSLEMLGQAKKVVITKDNTTIVDGAGSKEDIQARIVQIKAQIEETTSDYDREKLQERLAKLAGGVAVIRVGGATEVEVKERKDRVDDAMHATRAAVEEGIVAGGGVALLYATKALDKLTAVNEDQKFGIDIVRKALQAPVRQIAQNAGFDGSVIVGKLLEKGETNFGFNAQAGEYGDMFKFGVIDPTKVVRAALQDAASVAGLLITTEAMIGEKPEKKAPAGAPGGMGGMGDMDF.

Residues 30–33 (TLGP), K51, 87–91 (DGTTT), G415, and D496 contribute to the ATP site. A disordered region spans residues 527-546 (EKKAPAGAPGGMGGMGDMDF). Residues 534 to 546 (APGGMGGMGDMDF) show a composition bias toward gly residues.

It belongs to the chaperonin (HSP60) family. Forms a cylinder of 14 subunits composed of two heptameric rings stacked back-to-back. Interacts with the co-chaperonin GroES.

Its subcellular location is the cytoplasm. The enzyme catalyses ATP + H2O + a folded polypeptide = ADP + phosphate + an unfolded polypeptide.. Functionally, together with its co-chaperonin GroES, plays an essential role in assisting protein folding. The GroEL-GroES system forms a nano-cage that allows encapsulation of the non-native substrate proteins and provides a physical environment optimized to promote and accelerate protein folding. The chain is Chaperonin GroEL from Rhodospirillum centenum (strain ATCC 51521 / SW).